Consider the following 1079-residue polypeptide: Psi-producing oxygenase A (1079 aa).

Residues Thr105 to Val446 are linoleate 8R-lipoxygenase. His202 contributes to the heme b binding site. Residue Tyr374 is part of the active site. His377 contributes to the heme b binding site. Residues Gln654 to Glu1079 form a 9,12-octadecadienoate 8-hydroperoxide 8R-isomerase region.

This sequence belongs to the peroxidase family. In terms of assembly, homotetramer. It depends on heme b as a cofactor.

It carries out the reaction (9Z,12Z)-octadecadienoate + O2 = (8R,9Z,12Z)-8-hydroperoxyoctadeca-9,12-dienoate. It catalyses the reaction (8R,9Z,12Z)-8-hydroperoxyoctadeca-9,12-dienoate = (5S,8R,9Z,12Z)-5,8-dihydroxyoctadeca-9,12-dienoate. Its function is as follows. Bifunctional heme-containing enzyme that oxidizes linoleic acid to (8R,9Z,12Z)-8-hydroperoxyoctadeca-9,12-dienoate (within the N-terminal heme peroxidase domain), which is subsequently isomerized to (5S,8R,9Z,12Z)-5,8-dihydroxyoctadeca-9,12-dienoate (within the C-terminal P450 heme thiolate domain). Oxidized unsaturated fatty acids, so-called oxylipins, derived from endogenous fatty acids, influence the development of the asexual conidiophores and sexual cleistothecia and regulate the secondary metabolism. These substances were collectively named psi factors and are primarily a mixture of hydroxylated oleic, linoleic and alpha-linolenic acids. They are termed psi-beta, psi-alpha, and psi-gamma, respectively. Oxylipins may also serve as activators of mammalian immune responses contributing to enhanced resistance to opportunistic fungi and as factors that modulate fungal development contributing to resistance to host defenses. The sequence is that of Psi-producing oxygenase A (ppoA) from Aspergillus fumigatus (strain ATCC MYA-4609 / CBS 101355 / FGSC A1100 / Af293) (Neosartorya fumigata).